The sequence spans 667 residues: DNA ligase (667 aa).

NAD(+) contacts are provided by residues 32–36 (DSEYD), 81–82 (SL), and Glu-110. Residue Lys-112 is the N6-AMP-lysine intermediate of the active site. Arg-133, Glu-167, Lys-283, and Lys-307 together coordinate NAD(+). 4 residues coordinate Zn(2+): Cys-401, Cys-404, Cys-419, and Cys-424. Residues 586 to 667 (EGHPEFSGKT…FVDKQNELNS (82 aa)) enclose the BRCT domain.

This sequence belongs to the NAD-dependent DNA ligase family. LigA subfamily. Requires Mg(2+) as cofactor. Mn(2+) serves as cofactor.

It carries out the reaction NAD(+) + (deoxyribonucleotide)n-3'-hydroxyl + 5'-phospho-(deoxyribonucleotide)m = (deoxyribonucleotide)n+m + AMP + beta-nicotinamide D-nucleotide.. DNA ligase that catalyzes the formation of phosphodiester linkages between 5'-phosphoryl and 3'-hydroxyl groups in double-stranded DNA using NAD as a coenzyme and as the energy source for the reaction. It is essential for DNA replication and repair of damaged DNA. The protein is DNA ligase of Staphylococcus aureus (strain USA300).